Reading from the N-terminus, the 337-residue chain is Protein SphX (337 aa).

The N-terminal stretch at 1 to 30 (MTTLKPALRRAAVLLPIAAVASSLFPIQEA) is a signal peptide.

Belongs to the PstS family. The N-terminus is blocked.

It localises to the cell inner membrane. In terms of biological role, may be involved in the system for phosphate transport across the cytoplasmic membrane. The sequence is that of Protein SphX (sphX) from Synechococcus elongatus (strain ATCC 33912 / PCC 7942 / FACHB-805) (Anacystis nidulans R2).